Here is a 124-residue protein sequence, read N- to C-terminus: Large ribosomal subunit protein uL18 (124 aa).

The protein belongs to the universal ribosomal protein uL18 family. In terms of assembly, part of the 50S ribosomal subunit; part of the 5S rRNA/L5/L18/L25 subcomplex. Contacts the 5S and 23S rRNAs.

Its function is as follows. This is one of the proteins that bind and probably mediate the attachment of the 5S RNA into the large ribosomal subunit, where it forms part of the central protuberance. The chain is Large ribosomal subunit protein uL18 from Aquifex aeolicus (strain VF5).